A 1083-amino-acid chain; its full sequence is MNETTTKQPLKKRSLSSYLSNVSTRREELEKISKQETSEEEDTAGKHEQRETLSEEVSDKFPENVASFRSQTTSVHQATQNNLNAKESEDLAHKNDASSHEGEVNGDSRPDDVPETNEKISQAIRAKISSSSSSPNVRNVDIQNHQPFSRDQLRAMLKEPKRKTVDDFIEEEGLGAVEEEDLSDEVLEKNTTEPENVEKDIEYSDSDKDTDDVGSDDPTAPNSPIKLGRRKLVRGDQLDATTSSMFNNESDSELSDIDDSKNIALSSSLFRGGSSPVKETNNNLSNMNSSPAQNPKRGSVSRSNDSNKSSHIAVSKRPKQKKGIYRDSGGRTRLQIACDKGKYDVVKKMIEEGGYDINDQDNAGNTALHEAALQGHIEIVELLIENGADVNIKSIEMFGDTPLIDASANGHLDVVKYLLKNGADPTIRNAKGLTAFESVDDESEFDDEEDQKILREIKKRLSIAAKKWTNRAGIHNDKSKNGNNAHTIDQPPFDNTTKAKNEKAADSPSMASNIDEKAPEEEFYWTDVTSRAGKEKLFKASKEGHLPYVGTYVENGGKIDLRSFFESVKCGHEDITSIFLAFGFPVNQTSRDNKTSALMVAVGRGHLGTVKLLLEAGADPTKRDKKGRTALYYAKNSIMGITNSEEIQLIENAINNYLKKHSEDNNDDDDDDDNNNETYKHEKKREKTQSPILASRRSATPRIEDEEDDTRMLNLADDDFNNDRDVKESTTSDSRKRLDDNENVGTQYSLDWKKRKTNALQDEEKLKSISPLSMEPHSPKKAKSVEISKIHEETAAEREARLKEEEEYRKKRLEKKRKKEQELLQKLAEDEKKRIEEQEKQKVLEMERLEKATLEKARKMEREKEMEEISYRRAVRDLYPLGLKIINFNDKLDYKRFLPLYYFVDEKNDKFVLDLQVMILLKDIDLLSKDNQPTSEKIPVDPSHLTPLWNMLKFIFLYGGSYDDKKNNMENKRYVVNFDGVDLDTKIGYELLEYKKFVSLPMAWIKWDNVVIENHAKRKEIEGNMIQISINEFARWRNDKLNKAQQPTRKQRSLKIPRELPVKFQHRMSISSVLQQTSKEPFW.

Disordered stretches follow at residues 1–233 (MNET…RKLV) and 267–328 (SSLF…YRDS). A phosphoserine mark is found at S14 and S16. Positions 24 to 62 (TRREELEKISKQETSEEEDTAGKHEQRETLSEEVSDKFP) are enriched in basic and acidic residues. Residue T37 is modified to Phosphothreonine. Position 67 is a phosphoserine (S67). Positions 67-85 (SFRSQTTSVHQATQNNLNA) are enriched in polar residues. The span at 86-118 (KESEDLAHKNDASSHEGEVNGDSRPDDVPETNE) shows a compositional bias: basic and acidic residues. Polar residues predominate over residues 135 to 149 (PNVRNVDIQNHQPFS). Positions 151–166 (DQLRAMLKEPKRKTVD) are enriched in basic and acidic residues. The span at 167-185 (DFIEEEGLGAVEEEDLSDE) shows a compositional bias: acidic residues. Residues 186-207 (VLEKNTTEPENVEKDIEYSDSD) are compositionally biased toward basic and acidic residues. Positions 277 to 293 (VKETNNNLSNMNSSPAQ) are enriched in polar residues. Position 290 is a phosphoserine (S290). The segment covering 300–310 (VSRSNDSNKSS) has biased composition (low complexity). Over residues 314 to 323 (VSKRPKQKKG) the composition is skewed to basic residues. ANK repeat units follow at residues 329 to 359 (GGRTRLQIACDKGKYDVVKKMIEEGGYDIND), 363 to 392 (AGNTALHEAALQGHIEIVELLIENGADVNI), and 398 to 427 (FGDTPLIDASANGHLDVVKYLLKNGADPTI). The segment at 472 to 516 (AGIHNDKSKNGNNAHTIDQPPFDNTTKAKNEKAADSPSMASNIDE) is disordered. A compositionally biased stretch (polar residues) spans 481–496 (NGNNAHTIDQPPFDNT). At S507 the chain carries Phosphoserine. 2 ANK repeats span residues 532-561 (AGKEKLFKASKEGHLPYVGTYVENGGKIDL) and 593-622 (NKTSALMVAVGRGHLGTVKLLLEAGADPTK). Disordered stretches follow at residues 661-742 (HSED…DDNE) and 762-790 (DEEKLKSISPLSMEPHSPKKAKSVEISKI). A compositionally biased stretch (acidic residues) spans 665 to 675 (NNDDDDDDDNN). S698 carries the phosphoserine modification. T700 is modified (phosphothreonine). The span at 721–740 (NNDRDVKESTTSDSRKRLDD) shows a compositional bias: basic and acidic residues. S778 is subject to Phosphoserine.

As to quaternary structure, identified in the Set3C complex with HOS2, HST1, SNT1, SIF2, CPR1 and SET3.

In terms of biological role, unknown. Component of the Set3C complex, which is required to repress early/middle sporulation genes during meiosis. This is Protein HOS4 (HOS4) from Saccharomyces cerevisiae (strain ATCC 204508 / S288c) (Baker's yeast).